Consider the following 520-residue polypeptide: Probable kinase 098L (520 aa).

In terms of domain architecture, Protein kinase spans 82–393 (LTSVQSFGSK…NSPLLKKGFV (312 aa)). ATP-binding positions include 88–96 (FGSKSKQGI) and Lys-111. Asp-205 acts as the Proton acceptor in catalysis. Positions 416-442 (QTAQLIETDKEILDNLIDDLELKIVRK) form a coiled coil.

The protein belongs to the protein kinase superfamily.

In terms of biological role, probable kinase. The polypeptide is Probable kinase 098L (Aedes vexans (Inland floodwater mosquito)).